A 175-amino-acid chain; its full sequence is ATP-dependent protease subunit HslV (175 aa).

The active site involves Thr-2. Na(+) is bound by residues Gly-157, Cys-160, and Thr-163.

The protein belongs to the peptidase T1B family. HslV subfamily. In terms of assembly, a double ring-shaped homohexamer of HslV is capped on each side by a ring-shaped HslU homohexamer. The assembly of the HslU/HslV complex is dependent on binding of ATP.

Its subcellular location is the cytoplasm. The enzyme catalyses ATP-dependent cleavage of peptide bonds with broad specificity.. Its activity is regulated as follows. Allosterically activated by HslU binding. Protease subunit of a proteasome-like degradation complex believed to be a general protein degrading machinery. The polypeptide is ATP-dependent protease subunit HslV (Photobacterium profundum (strain SS9)).